Consider the following 420-residue polypeptide: Hemojuvelin (420 aa).

Residues 1-32 form the signal peptide; that stretch reads MGQSPSPRSPHGSPPTLSTLTLLLLLCGQAHS. Residue Tyr-43 is modified to Phosphotyrosine. Asn-111 is a glycosylation site (N-linked (GlcNAc...) asparagine). Residues 113 to 135 form a disordered region; sequence SRQGPTAPPPARGPALPGAGPAP. A compositionally biased stretch (low complexity) spans 125 to 134; it reads GPALPGAGPA. Intrachain disulfides connect Cys-141/Cys-223 and Cys-160/Cys-310. N-linked (GlcNAc...) asparagine glycans are attached at residues Asn-206 and Asn-365. Residue Asp-393 is the site of GPI-anchor amidated aspartate attachment. A propeptide spans 394–420 (removed in mature form); that stretch reads AGPPLSPAICLVPLLSALFVLWLCFSK.

The protein belongs to the repulsive guidance molecule (RGM) family. Interacts with BMP2 and BMP4. Interacts with BMP6. Interacts with BMPR1B. Interacts with TMPRSS6. Autocatalytically cleaved at low pH; the two chains remain linked via two disulfide bonds. Also proteolytically processed by TMPRSS6, several fragments being released in the extracellular space; regulates HJV activity in BMP signaling and thefore iron homeostasis. Muscle cell lineage.

Its subcellular location is the cell membrane. Acts as a bone morphogenetic protein (BMP) coreceptor. Through enhancement of BMP signaling regulates hepcidin (HAMP) expression and regulates iron homeostasis. In Mus musculus (Mouse), this protein is Hemojuvelin.